Consider the following 690-residue polypeptide: MSIDNELSKCRNIGIMAHIDAGKTTTTERILFYTGKQNRIGEVHEGAASMDWMEQEKERGITITSAATTCFWNGHRINIIDTPGHVDFTIEVERSLRVLDGAVAVFDGVAGVEPQSETVWRQADKYNVPRICFMNKMDRMGADFYRCVDMVVERLGATPLVLQLPIGIEKDFVGVVDLLEMRSIIWDEDSLGASFHYGEIPKDMLDKAQEYRNKLLESAVELNDEAMNLYFEGKEISVSLLKSCIRAGVIQSKFVPVLCGSAFKNRGVQPLLDAVVDFLPAPNDIPMMEALDVKTSNTINIKSSIDGKFVALAFKVMTDKFVGSLTFIRIYSGRLSSKTTVLNAVKNSTESIGRILLMHANNREDITEAKAGDIVALAGLKKTVTGDTLCTLDQPIILERMEFPEPVMEIAVEPKSTADQEKMGIALSRLVAEDPSLGMCVNPESGQTILKGMGELHLEVIVDRMRREFNVEANIGAPQVAYRETITKSVEIEYIHKKQTGGAGQFAKVNILFEPLPPGSGFQFESKITGGAIPKEYIPGVQNGLENIRGSGMLAGFPVIDFKATLVDGAFHEVDSSPLAFELAAKGAFRDMVNKAGAILLEPIMKVEIITPDEYMGDVIGDINSRRGRVAEMQDRHNTKVILAFIPLAKMFGYVKDLRSMSQGRAQYSMYFSCYEQVPDNIVANEIKTK.

Positions 8 to 283 (SKCRNIGIMA…AVVDFLPAPN (276 aa)) constitute a tr-type G domain. Residues 17-24 (AHIDAGKT), 81-85 (DTPGH), and 135-138 (NKMD) each bind GTP.

Belongs to the TRAFAC class translation factor GTPase superfamily. Classic translation factor GTPase family. EF-G/EF-2 subfamily.

It localises to the cytoplasm. Functionally, catalyzes the GTP-dependent ribosomal translocation step during translation elongation. During this step, the ribosome changes from the pre-translocational (PRE) to the post-translocational (POST) state as the newly formed A-site-bound peptidyl-tRNA and P-site-bound deacylated tRNA move to the P and E sites, respectively. Catalyzes the coordinated movement of the two tRNA molecules, the mRNA and conformational changes in the ribosome. The polypeptide is Elongation factor G (Ehrlichia chaffeensis (strain ATCC CRL-10679 / Arkansas)).